Here is a 262-residue protein sequence, read N- to C-terminus: 4-hydroxy-2-oxo-heptane-1,7-dioate aldolase (262 aa).

His-45 (proton acceptor) is an active-site residue. Residue Gln-147 coordinates substrate. An a divalent metal cation-binding site is contributed by Glu-149. Substrate-binding residues include Ala-174 and Asp-175. Asp-175 lines the a divalent metal cation pocket.

Belongs to the HpcH/HpaI aldolase family. In terms of assembly, homohexamer; trimer of dimers. A divalent metal cation serves as cofactor.

It carries out the reaction 4-hydroxy-2-oxoheptanedioate = succinate semialdehyde + pyruvate. The catalysed reaction is D-glyceraldehyde + 3-hydroxypyruvate = (3R,4S,5R)-3,4,5,6-tetrahydroxy-2-oxohexanoate. It catalyses the reaction D-glyceraldehyde + 3-hydroxypyruvate = 2-dehydro-D-gluconate. The enzyme catalyses D-glyceraldehyde + 3-hydroxypyruvate = 2-dehydro-D-galactonate. It carries out the reaction D-glyceraldehyde + pyruvate = 2-dehydro-3-deoxy-L-galactonate. The catalysed reaction is 2-dehydro-3-deoxy-D-gluconate = D-glyceraldehyde + pyruvate. It participates in aromatic compound metabolism; 4-hydroxyphenylacetate degradation; pyruvate and succinate semialdehyde from 4-hydroxyphenylacetate: step 7/7. Catalyzes the reversible retro-aldol cleavage of 4-hydroxy-2-ketoheptane-1,7-dioate (HKHD) to pyruvate and succinic semialdehyde. In vitro, can catalyze the aldolisation reaction between hydroxypyruvate (HPA) or pyruvate (PA) and D-glyceraldehyde (D-GA). The condensation of hydroxypyruvate and D-glyceraldehyde produces (3R,4S,5R)-3,4,5,6-tetrahydroxy-2-oxohexanoate as the major product, 2-dehydro-D-gluconate and 2-dehydro-D-galactonate. The condensation of pyruvate and D-glyceraldehyde produces 2-dehydro-3-deoxy-L-galactonate as the major product and 2-dehydro-3-deoxy-D-gluconate. The chain is 4-hydroxy-2-oxo-heptane-1,7-dioate aldolase from Escherichia coli (strain ATCC 8739 / DSM 1576 / NBRC 3972 / NCIMB 8545 / WDCM 00012 / Crooks).